We begin with the raw amino-acid sequence, 389 residues long: tRNA-specific 2-thiouridylase MnmA (389 aa).

ATP is bound by residues 35–42 (GMSGGVDS) and Met-61. Positions 121 to 123 (NPD) are interaction with target base in tRNA. Cys-126 (nucleophile) is an active-site residue. Cysteines 126 and 223 form a disulfide. Residue Gly-151 participates in ATP binding. The interaction with tRNA stretch occupies residues 173–175 (KDQ). Cys-223 (cysteine persulfide intermediate) is an active-site residue. Positions 335–336 (RY) are interaction with tRNA.

This sequence belongs to the MnmA/TRMU family.

It is found in the cytoplasm. The enzyme catalyses S-sulfanyl-L-cysteinyl-[protein] + uridine(34) in tRNA + AH2 + ATP = 2-thiouridine(34) in tRNA + L-cysteinyl-[protein] + A + AMP + diphosphate + H(+). Functionally, catalyzes the 2-thiolation of uridine at the wobble position (U34) of tRNA, leading to the formation of s(2)U34. The polypeptide is tRNA-specific 2-thiouridylase MnmA (Mannheimia succiniciproducens (strain KCTC 0769BP / MBEL55E)).